The chain runs to 134 residues: Profilin-3 (134 aa).

Cysteines 13 and 118 form a disulfide. An Involved in PIP2 interaction motif is present at residues A84–T100. A Phosphothreonine modification is found at T114.

This sequence belongs to the profilin family. In terms of assembly, occurs in many kinds of cells as a complex with monomeric actin in a 1:1 ratio. Phosphorylated by MAP kinases.

The protein localises to the cytoplasm. The protein resides in the cytoskeleton. Binds to actin and affects the structure of the cytoskeleton. At high concentrations, profilin prevents the polymerization of actin, whereas it enhances it at low concentrations. The chain is Profilin-3 from Olea europaea (Common olive).